Reading from the N-terminus, the 160-residue chain is UPF0178 protein PSPA7_5991 (160 aa).

It belongs to the UPF0178 family.

The sequence is that of UPF0178 protein PSPA7_5991 from Pseudomonas paraeruginosa (strain DSM 24068 / PA7) (Pseudomonas aeruginosa (strain PA7)).